The sequence spans 129 residues: Small ribosomal subunit protein uS11 (129 aa).

The protein belongs to the universal ribosomal protein uS11 family. In terms of assembly, part of the 30S ribosomal subunit. Interacts with proteins S7 and S18. Binds to IF-3.

In terms of biological role, located on the platform of the 30S subunit, it bridges several disparate RNA helices of the 16S rRNA. Forms part of the Shine-Dalgarno cleft in the 70S ribosome. This chain is Small ribosomal subunit protein uS11, found in Methylocella silvestris (strain DSM 15510 / CIP 108128 / LMG 27833 / NCIMB 13906 / BL2).